Consider the following 134-residue polypeptide: Small ribosomal subunit protein uS11 (134 aa).

The protein belongs to the universal ribosomal protein uS11 family. Part of the 30S ribosomal subunit. Interacts with proteins S7 and S18. Binds to IF-3.

Its function is as follows. Located on the platform of the 30S subunit, it bridges several disparate RNA helices of the 16S rRNA. Forms part of the Shine-Dalgarno cleft in the 70S ribosome. This chain is Small ribosomal subunit protein uS11, found in Paracidovorax citrulli (strain AAC00-1) (Acidovorax citrulli).